The chain runs to 1397 residues: DNA-directed RNA polymerase subunit beta' (1397 aa).

Residues cysteine 75, cysteine 77, cysteine 90, and cysteine 93 each coordinate Zn(2+). Mg(2+)-binding residues include aspartate 465, aspartate 467, and aspartate 469. Cysteine 819, cysteine 893, cysteine 900, and cysteine 903 together coordinate Zn(2+).

It belongs to the RNA polymerase beta' chain family. In terms of assembly, the RNAP catalytic core consists of 2 alpha, 1 beta, 1 beta' and 1 omega subunit. When a sigma factor is associated with the core the holoenzyme is formed, which can initiate transcription. Requires Mg(2+) as cofactor. The cofactor is Zn(2+).

It carries out the reaction RNA(n) + a ribonucleoside 5'-triphosphate = RNA(n+1) + diphosphate. In terms of biological role, DNA-dependent RNA polymerase catalyzes the transcription of DNA into RNA using the four ribonucleoside triphosphates as substrates. The sequence is that of DNA-directed RNA polymerase subunit beta' from Acinetobacter baylyi (strain ATCC 33305 / BD413 / ADP1).